A 731-amino-acid chain; its full sequence is Catalase-peroxidase (731 aa).

Residues Met-1–Asn-23 form a disordered region. A cross-link (tryptophyl-tyrosyl-methioninium (Trp-Tyr) (with M-244)) is located at residues Trp-95 to Tyr-218. His-96 serves as the catalytic Proton acceptor. The segment at residues Tyr-218 to Met-244 is a cross-link (tryptophyl-tyrosyl-methioninium (Tyr-Met) (with W-95)). His-259 is a binding site for heme b.

The protein belongs to the peroxidase family. Peroxidase/catalase subfamily. In terms of assembly, homodimer or homotetramer. The cofactor is heme b. Formation of the three residue Trp-Tyr-Met cross-link is important for the catalase, but not the peroxidase activity of the enzyme.

It carries out the reaction H2O2 + AH2 = A + 2 H2O. It catalyses the reaction 2 H2O2 = O2 + 2 H2O. Functionally, bifunctional enzyme with both catalase and broad-spectrum peroxidase activity. The sequence is that of Catalase-peroxidase from Synechococcus sp. (strain WH7803).